The chain runs to 176 residues: Ribosome maturation factor RimM (176 aa).

One can recognise a PRC barrel domain in the interval glutamate 97–phenylalanine 176.

It belongs to the RimM family. Binds ribosomal protein uS19.

The protein localises to the cytoplasm. Its function is as follows. An accessory protein needed during the final step in the assembly of 30S ribosomal subunit, possibly for assembly of the head region. Essential for efficient processing of 16S rRNA. May be needed both before and after RbfA during the maturation of 16S rRNA. It has affinity for free ribosomal 30S subunits but not for 70S ribosomes. This chain is Ribosome maturation factor RimM, found in Shewanella sediminis (strain HAW-EB3).